The primary structure comprises 700 residues: MSLGDSDRERVVAALGRDPTPAEAALFENLWSEHCAYRSSRSLLSAFDSDSEAVVVGPGDDAAVVRVPGTDQLVTVGVESHNHPSYVDPYDGAATGVGGIVRDTLSMGAYPIALADALYFGDFDDEHARYLLDGVVEGISDYGNAIGVPTVAGATQFHDGYTGNPLVNVACVGLVTEDRLVTAAAKSPGNKLVLVGNATGRDGLGGASFASEDLAEDAETADRPAVQVGDPYTEKLLIEANETLLDRDLVVAARDLGAAGLGGASSEMVAQGELGARITLDAVHQREPEMNAMEILLAESQERMCYEVAPADVDAVREVATRYDLGCSVIGEVTTGNYVCEFDGETVVDAPATVLADGAPATDQPSTVPQAPATDRPDPALGTAIDAVLSAPNTASNEWVYRQYDHEVGARTVQRPGEDAAGLALHEADDGTTVALSAGANPGWTACQPYAGAYATAVENATNLAAAGAEPLAAVDCLNGGNPEDPDVYGGFEAMVAGLADGCRAIDTPVVGGNVSLYNDSATGPIAPTPTLAVVGYRDQHPVPGSGLAGDGDLVLVGGHADGLGGSVYLQALGGTDQFPAADAAGVDAVREAATRADTLAVHDISDGGLAVTLAEMVTADAGATVTVPGLAALFSECPGRAVVETRDADALQAALDVPVVRLGSATTDGTLSVTVDDETVTRDAATIRDHRGVIARELD.

His34 is a catalytic residue. Tyr37 is an ATP binding site. Glu79 lines the Mg(2+) pocket. Substrate-binding positions include Ser80–His83 and Arg102. Catalysis depends on His81, which acts as the Proton acceptor. Asp103 lines the Mg(2+) pocket. A substrate-binding site is contributed by Gln227. Asp255 is a binding site for Mg(2+). A substrate-binding site is contributed by Glu299–Gln301. Residues Asp476 and Gly513 each contribute to the ATP site. Residue Asn514 participates in Mg(2+) binding. Ser516 provides a ligand contact to substrate.

Belongs to the FGAMS family. As to quaternary structure, monomer. Part of the FGAM synthase complex composed of 1 PurL, 1 PurQ and 2 PurS subunits.

It localises to the cytoplasm. The enzyme catalyses N(2)-formyl-N(1)-(5-phospho-beta-D-ribosyl)glycinamide + L-glutamine + ATP + H2O = 2-formamido-N(1)-(5-O-phospho-beta-D-ribosyl)acetamidine + L-glutamate + ADP + phosphate + H(+). The protein operates within purine metabolism; IMP biosynthesis via de novo pathway; 5-amino-1-(5-phospho-D-ribosyl)imidazole from N(2)-formyl-N(1)-(5-phospho-D-ribosyl)glycinamide: step 1/2. In terms of biological role, part of the phosphoribosylformylglycinamidine synthase complex involved in the purines biosynthetic pathway. Catalyzes the ATP-dependent conversion of formylglycinamide ribonucleotide (FGAR) and glutamine to yield formylglycinamidine ribonucleotide (FGAM) and glutamate. The FGAM synthase complex is composed of three subunits. PurQ produces an ammonia molecule by converting glutamine to glutamate. PurL transfers the ammonia molecule to FGAR to form FGAM in an ATP-dependent manner. PurS interacts with PurQ and PurL and is thought to assist in the transfer of the ammonia molecule from PurQ to PurL. This is Phosphoribosylformylglycinamidine synthase subunit PurL from Halobacterium salinarum (strain ATCC 29341 / DSM 671 / R1).